The chain runs to 417 residues: Serine hydroxymethyltransferase (417 aa).

Residues Leu121 and 125 to 127 (GHL) each bind (6S)-5,6,7,8-tetrahydrofolate. Residue Lys229 is modified to N6-(pyridoxal phosphate)lysine. 355-357 (SPF) contacts (6S)-5,6,7,8-tetrahydrofolate.

It belongs to the SHMT family. In terms of assembly, homodimer. Pyridoxal 5'-phosphate serves as cofactor.

Its subcellular location is the cytoplasm. The enzyme catalyses (6R)-5,10-methylene-5,6,7,8-tetrahydrofolate + glycine + H2O = (6S)-5,6,7,8-tetrahydrofolate + L-serine. It functions in the pathway one-carbon metabolism; tetrahydrofolate interconversion. The protein operates within amino-acid biosynthesis; glycine biosynthesis; glycine from L-serine: step 1/1. In terms of biological role, catalyzes the reversible interconversion of serine and glycine with tetrahydrofolate (THF) serving as the one-carbon carrier. This reaction serves as the major source of one-carbon groups required for the biosynthesis of purines, thymidylate, methionine, and other important biomolecules. Also exhibits THF-independent aldolase activity toward beta-hydroxyamino acids, producing glycine and aldehydes, via a retro-aldol mechanism. This is Serine hydroxymethyltransferase from Serratia proteamaculans (strain 568).